The primary structure comprises 334 residues: Chitin synthase export chaperone (334 aa).

7 consecutive transmembrane segments (helical) span residues 49-69 (IIFE…TVIM), 88-108 (FFYL…GVVP), 123-143 (GFSS…FQLY), 159-179 (LAAF…WAGL), 185-205 (VGLF…YVAM), 220-240 (LGDI…LYAF), and 250-270 (HYLD…MMVY).

This sequence belongs to the CHS7 family. In terms of assembly, interacts with CHS3.

It is found in the endoplasmic reticulum membrane. Functionally, chaperone required for the export of the chitin synthase CHS3 from the endoplasmic reticulum. The polypeptide is Chitin synthase export chaperone (CHS7) (Gibberella zeae (strain ATCC MYA-4620 / CBS 123657 / FGSC 9075 / NRRL 31084 / PH-1) (Wheat head blight fungus)).